We begin with the raw amino-acid sequence, 927 residues long: LPS-assembly protein LptD (927 aa).

Residues 1–22 (MALKSPAFRKKFPLLVTGSLLA) form the signal peptide. Residues 60–100 (LPPRPVHSTASVSSNGTVTSESSSSGEQVAGPQLVTEAKGK) form a disordered region. Low complexity predominate over residues 70-86 (SVSSNGTVTSESSSSGE).

This sequence belongs to the LptD family. Component of the lipopolysaccharide transport and assembly complex. Interacts with LptE and LptA.

The protein resides in the cell outer membrane. Its function is as follows. Together with LptE, is involved in the assembly of lipopolysaccharide (LPS) at the surface of the outer membrane. The protein is LPS-assembly protein LptD of Pseudomonas syringae pv. tomato (strain ATCC BAA-871 / DC3000).